An 85-amino-acid polypeptide reads, in one-letter code: Hepcidin (85 aa).

The first 22 residues, 1–22, serve as a signal peptide directing secretion; it reads MALSTRIQAACLLLLLLASVAS. A propeptide spanning residues 23 to 54 is cleaved from the precursor; the sequence is VSVLPHQTGQLTDLRAQDTAGAEAGLQPTLQL. Intrachain disulfides connect cysteine 67–cysteine 83, cysteine 70–cysteine 73, cysteine 71–cysteine 79, and cysteine 74–cysteine 82.

Belongs to the hepcidin family. In terms of assembly, interacts with SLC40A1; this interaction promotes SLC40A1 rapid ubiquitination.

It localises to the secreted. In terms of biological role, liver-produced hormone that constitutes the main circulating regulator of iron absorption and distribution across tissues. Acts by promoting endocytosis and degradation of ferroportin/SLC40A1, leading to the retention of iron in iron-exporting cells and decreased flow of iron into plasma. Controls the major flows of iron into plasma: absorption of dietary iron in the intestine, recycling of iron by macrophages, which phagocytose old erythrocytes and other cells, and mobilization of stored iron from hepatocytes. Its function is as follows. Has strong antimicrobial activity against E.coli ML35P N.cinerea and weaker against S.epidermidis, S.aureus and group b streptococcus bacteria. Active against the fungus C.albicans. No activity against P.aeruginosa. The chain is Hepcidin (HAMP) from Canis lupus familiaris (Dog).